Here is a 317-residue protein sequence, read N- to C-terminus: Cell division protein FtsX (317 aa).

Over 1–39 (MAIVRHKQPPLRRFMMYWVDHARQAFSSLGELWRNPLAS) the chain is Cytoplasmic. The helical transmembrane segment at 40–60 (LMTLAVLGVSLALPSCFHVLL) threads the bilayer. Topologically, residues 61-188 (KNAEVVEGSW…LQGIMNLLRH (128 aa)) are periplasmic. The chain crosses the membrane as a helical span at residues 189-209 (TITGIAVLLLSAVLLIVGNTL). Over 210–241 (RLNILNQRSEIEVLKLVGATDAFIHRPFLYTG) the chain is Cytoplasmic. A helical transmembrane segment spans residues 242 to 262 (IWFGVIGGMLAWWLTEVMVIW). Over 263–280 (SEGVVNELAGLYNSNFRL) the chain is Periplasmic. The helical transmembrane segment at 281-301 (VGMGAVDGINLILLGALLGLI) threads the bilayer. Residues 302–317 (ASWFSVHRHIRDIEPS) lie on the Cytoplasmic side of the membrane.

It belongs to the ABC-4 integral membrane protein family. FtsX subfamily. In terms of assembly, forms a membrane-associated complex with FtsE.

The protein localises to the cell inner membrane. Part of the ABC transporter FtsEX involved in cellular division. Encoded in an operon consisting of genes ftsY, ftsE and ftsX. The sequence is that of Cell division protein FtsX from Aeromonas hydrophila.